Reading from the N-terminus, the 345-residue chain is Platelet-derived growth factor C (345 aa).

Residues 1 to 22 form the signal peptide; it reads MLLLGLLLLTSALAGQRTGTRA. Polar residues predominate over residues 24–33; the sequence is SNLSSKLQLS. The interval 24–45 is disordered; that stretch reads SNLSSKLQLSSDKEQNGVQDPR. Asn-25 is a glycosylation site (N-linked (GlcNAc...) asparagine). Basic and acidic residues predominate over residues 34–45; that stretch reads SDKEQNGVQDPR. In terms of domain architecture, CUB spans 46-163; that stretch reads HERVVTISGN…PGFCIHYSII (118 aa). Asn-55 carries an N-linked (GlcNAc...) asparagine glycan. 4 disulfides stabilise this stretch: Cys-104-Cys-124, Cys-250-Cys-294, Cys-280-Cys-335, and Cys-287-Cys-337.

It belongs to the PDGF/VEGF growth factor family. As to quaternary structure, homodimer; disulfide-linked. Interacts with PDGFRA homodimers, and with heterodimers formed by PDGFRA and PDGFRB. Interacts (via CUB domain) with PLAT (via kringle domain). Post-translationally, proteolytic removal of the N-terminal CUB domain releasing the core domain is necessary for unmasking the receptor-binding epitopes of the core domain. Cleavage after basic residues in the hinge region (region connecting the CUB and growth factor domains) gives rise to the receptor-binding form. Cleaved by PLAT and PLG. In terms of processing, sumoylated with SUMO1. N-glycosylated. In terms of tissue distribution, highly expressed in the kidney and adrenal gland. In the kidney, it is expressed in arteriolar smooth muscle cells and in epithelial cells of individual segments (at protein level).

The protein resides in the cytoplasm. It is found in the cytosol. It localises to the secreted. Its subcellular location is the nucleus. The protein localises to the cytoplasmic granule. The protein resides in the cell membrane. Functionally, growth factor that plays an essential role in the regulation of embryonic development, cell proliferation, cell migration, survival and chemotaxis. Potent mitogen and chemoattractant for cells of mesenchymal origin. Required for normal skeleton formation during embryonic development, especially for normal development of the craniofacial skeleton and for normal development of the palate. Required for normal skin morphogenesis during embryonic development. Plays an important role in wound healing, where it appears to be involved in three stages: inflammation, proliferation and remodeling. Plays an important role in angiogenesis and blood vessel development. Involved in fibrotic processes, in which transformation of interstitial fibroblasts into myofibroblasts plus collagen deposition occurs. The CUB domain has mitogenic activity in coronary artery smooth muscle cells, suggesting a role beyond the maintenance of the latency of the PDGF domain. In the nucleus, PDGFC seems to have additional function. The sequence is that of Platelet-derived growth factor C (Pdgfc) from Rattus norvegicus (Rat).